Here is a 354-residue protein sequence, read N- to C-terminus: Glucose 1-dehydrogenase (354 aa).

A disordered region spans residues 1-27 (MKVIGVTRDDDGPQLLERERPSPDPGE). Positions 7-22 (TRDDDGPQLLERERPS) are enriched in basic and acidic residues. Residue aspartate 38 coordinates Zn(2+). Threonine 40 lines the substrate pocket. 2 residues coordinate Zn(2+): histidine 63 and glutamate 64. Residues 91–110 (PNGETNEYFRRGEPDMAPDG) form a disordered region. Substrate-binding residues include glutamate 114 and glutamate 150. Residue glutamate 150 coordinates Zn(2+). Residues 181 to 184 (NGSL), 204 to 205 (RR), 269 to 271 (LGI), and 298 to 300 (TVN) contribute to the NADP(+) site. Asparagine 300 lines the substrate pocket.

The protein belongs to the zinc-containing alcohol dehydrogenase family. Glucose 1-dehydrogenase subfamily. The cofactor is Zn(2+).

It catalyses the reaction D-glucose + NAD(+) = D-glucono-1,5-lactone + NADH + H(+). It carries out the reaction D-glucose + NADP(+) = D-glucono-1,5-lactone + NADPH + H(+). Functionally, catalyzes the NAD(P)(+)-dependent oxidation of D-glucose to D-gluconate via gluconolactone. Can utilize both NAD(+) and NADP(+) as electron acceptor. Is involved in the degradation of glucose through a modified Entner-Doudoroff pathway. This chain is Glucose 1-dehydrogenase, found in Haloarcula marismortui (strain ATCC 43049 / DSM 3752 / JCM 8966 / VKM B-1809) (Halobacterium marismortui).